The chain runs to 301 residues: tRNA pseudouridine synthase B (301 aa).

Catalysis depends on aspartate 45, which acts as the Nucleophile.

The protein belongs to the pseudouridine synthase TruB family. Type 1 subfamily.

The catalysed reaction is uridine(55) in tRNA = pseudouridine(55) in tRNA. Its function is as follows. Responsible for synthesis of pseudouridine from uracil-55 in the psi GC loop of transfer RNAs. In Streptomyces avermitilis (strain ATCC 31267 / DSM 46492 / JCM 5070 / NBRC 14893 / NCIMB 12804 / NRRL 8165 / MA-4680), this protein is tRNA pseudouridine synthase B.